The sequence spans 151 residues: 3-hydroxyacyl-[acyl-carrier-protein] dehydratase FabZ (151 aa).

His-54 is a catalytic residue.

It belongs to the thioester dehydratase family. FabZ subfamily.

The protein resides in the cytoplasm. It carries out the reaction a (3R)-hydroxyacyl-[ACP] = a (2E)-enoyl-[ACP] + H2O. In terms of biological role, involved in unsaturated fatty acids biosynthesis. Catalyzes the dehydration of short chain beta-hydroxyacyl-ACPs and long chain saturated and unsaturated beta-hydroxyacyl-ACPs. The polypeptide is 3-hydroxyacyl-[acyl-carrier-protein] dehydratase FabZ (Blochmanniella floridana).